A 239-amino-acid polypeptide reads, in one-letter code: Fatty acid metabolism regulator protein (239 aa).

In terms of domain architecture, HTH gntR-type spans 6–74 (QSPAGFAEEY…HGKPTKVNNF (69 aa)). A DNA-binding region (H-T-H motif) is located at residues 34–53 (ERELSELIGVTRTTLREVLQ).

In terms of assembly, homodimer.

It localises to the cytoplasm. Its function is as follows. Multifunctional regulator of fatty acid metabolism. The chain is Fatty acid metabolism regulator protein from Shigella flexneri.